Consider the following 86-residue polypeptide: uncharacterized protein (86 aa).

The chain crosses the membrane as a helical span at residues 12–32 (IIFIFAIIIIVVLCVITYLYL).

It localises to the membrane. This is an uncharacterized protein from Escherichia coli (strain K12).